A 531-amino-acid polypeptide reads, in one-letter code: Cytochrome P450 monooxygenase peniB (531 aa).

The helical transmembrane segment at 30–48 (ILSIAAVVFLGYLLLRPLF) threads the bilayer. A heme-binding site is contributed by Cys445.

Belongs to the cytochrome P450 family. Requires heme as cofactor.

The protein localises to the membrane. It carries out the reaction silphinene-15-oate + 2 reduced [NADPH--hemoprotein reductase] + 2 O2 = gamma-lactone-2-keto[5.5.5.5]fenestrane + 2 oxidized [NADPH--hemoprotein reductase] + 3 H2O + H(+). The protein operates within secondary metabolite biosynthesis; terpenoid biosynthesis. In terms of biological role, cytochrome P450 monooxygenase; part of the gene cluster that mediates the biosynthesis of penifulvin A, a potent insecticidal sesquiterpene that features a [5.5.5.6]dioxafenestrane ring. Within the pathway, peniB catalyzes the multi-step oxidation of silphinene to synthesize gamma-lactone-2-keto[5.5.5.5]fenestrane, including oxidation of the C15 methylgroup in silphinene to form silphinene-15-oic acid, activationof the C1-C2 double bond to form the gamma-lactone-2-hydroxy[5.5.5.5]fenestrane, and dehydrogenation of the hydroxy group at C2 of gamma-lactone-2-hydroxy[5.5.5.5]fenestrane to generate gamma-lactone-2-keto[5.5.5.5]fenestrane. The first step of the pathway is performed by the sesquiterpene cyclase peniA that generates the angular triquinane scaffold silphinene via cyclization of the linear farnesyl pyrophosphate (FPP). The cytochrome P450 monooxygenase peniB and the flavin-dependent monooxygenase peniC then catalyze a series of oxidation reactions to transform silphinene into penifulvin A. This chain is Cytochrome P450 monooxygenase peniB, found in Penicillium patulum (Penicillium griseofulvum).